Here is a 156-residue protein sequence, read N- to C-terminus: Small ribosomal subunit protein bS16 (156 aa).

Basic and acidic residues predominate over residues 85 to 120 (GESGAEGTLKSKSEKEAFVAPERDSVILPEEPKQEE). A disordered region spans residues 85–156 (GESGAEGTLK…APAEDAEKSE (72 aa)). Positions 132–150 (PAEEAAEAPAEEAAEAPAE) are enriched in acidic residues.

It belongs to the bacterial ribosomal protein bS16 family.

This is Small ribosomal subunit protein bS16 from Micrococcus luteus (strain ATCC 4698 / DSM 20030 / JCM 1464 / CCM 169 / CCUG 5858 / IAM 1056 / NBRC 3333 / NCIMB 9278 / NCTC 2665 / VKM Ac-2230) (Micrococcus lysodeikticus).